Reading from the N-terminus, the 204-residue chain is GTP cyclohydrolase 1 (204 aa).

The Zn(2+) site is built by C93, H96, and C164.

The protein belongs to the GTP cyclohydrolase I family. As to quaternary structure, toroid-shaped homodecamer, composed of two pentamers of five dimers.

The catalysed reaction is GTP + H2O = 7,8-dihydroneopterin 3'-triphosphate + formate + H(+). It participates in cofactor biosynthesis; 7,8-dihydroneopterin triphosphate biosynthesis; 7,8-dihydroneopterin triphosphate from GTP: step 1/1. The chain is GTP cyclohydrolase 1 from Rhizobium meliloti (strain 1021) (Ensifer meliloti).